The chain runs to 233 residues: MSGLFVSFEGVDGVGKTTQVERLRAYLEAQGRTVVVTREPGGTVLGKAIRQLLLHGVDGGAVDIAPRAEALLFAADRAQHVAETIRPALERGEVVITDRYLDSSLAYQAGGRELTPEEIRSLSMWATNNLLPDRTYLLDMDPALSHNRLEHAEDRMESAGSDFQSRTRQAFLDLAAAEPNRFHVIDASQSIEQVWSAIEADIQTLLRDNVADVDTVMARSGASTGAVTMGGVR.

10–17 provides a ligand contact to ATP; sequence GVDGVGKT.

The protein belongs to the thymidylate kinase family.

It catalyses the reaction dTMP + ATP = dTDP + ADP. Phosphorylation of dTMP to form dTDP in both de novo and salvage pathways of dTTP synthesis. This is Thymidylate kinase from Bifidobacterium longum subsp. infantis (strain ATCC 15697 / DSM 20088 / JCM 1222 / NCTC 11817 / S12).